A 163-amino-acid chain; its full sequence is Arginine repressor (163 aa).

Belongs to the ArgR family.

The protein resides in the cytoplasm. It functions in the pathway amino-acid biosynthesis; L-arginine biosynthesis [regulation]. Regulates arginine biosynthesis genes. This chain is Arginine repressor, found in Corynebacterium diphtheriae (strain ATCC 700971 / NCTC 13129 / Biotype gravis).